Here is a 59-residue protein sequence, read N- to C-terminus: U-myrmeciitoxin(01)-Mg5a (59 aa).

A signal peptide spans 1–21 (MRLSYLSLALAIIFVLTIMHA). A propeptide spanning residues 22 to 38 (SNVEAKASADPEPDAVG) is cleaved from the precursor.

As to expression, expressed by the venom gland.

The protein resides in the secreted. Its function is as follows. May have antimicrobial properties, like most ant linear peptides. The polypeptide is U-myrmeciitoxin(01)-Mg5a (Myrmecia gulosa (Red bulldog ant)).